Here is a 290-residue protein sequence, read N- to C-terminus: Probable proteasome subunit beta type-6 (290 aa).

This sequence belongs to the peptidase T1B family. In terms of assembly, the 26S proteasome consists of a 20S proteasome core and two 19S regulatory subunits. The 20S proteasome core is composed of 28 subunits that are arranged in four stacked rings, resulting in a barrel-shaped structure. The two end rings are each formed by seven alpha subunits, and the two central rings are each formed by seven beta subunits. The catalytic chamber with the active sites is on the inside of the barrel.

It localises to the cytoplasm. Its subcellular location is the nucleus. Functionally, non-catalytic component of the proteasome which degrades poly-ubiquitinated proteins in the cytoplasm and in the nucleus. It is essential for the regulated turnover of proteins and for the removal of misfolded proteins. The proteasome is a multicatalytic proteinase complex that is characterized by its ability to cleave peptides with Arg, Phe, Tyr, Leu, and Glu adjacent to the leaving group at neutral or slightly basic pH. It has an ATP-dependent proteolytic activity. This Encephalitozoon cuniculi (strain GB-M1) (Microsporidian parasite) protein is Probable proteasome subunit beta type-6 (PRE7).